A 748-amino-acid polypeptide reads, in one-letter code: Polyribonucleotide nucleotidyltransferase (748 aa).

Residues aspartate 484 and aspartate 490 each contribute to the Mg(2+) site. Positions 551 to 610 constitute a KH domain; the sequence is PRIETMSVPKDKIRDVIGTGGKVIREIVATTGAKVDIEDDGTVRLSSSDPANIEAAREWI. An S1 motif domain is found at 620-688; it reads GKIYNGKVVN…NRGKVRLSMR (69 aa). The interval 693–748 is disordered; that stretch reads ETGAELDDNRPPRENAERRGGERPRRDRGPRRESGDRPARRDMEPEFAPAFLRKDS. Residues 699–736 show a composition bias toward basic and acidic residues; the sequence is DDNRPPRENAERRGGERPRRDRGPRRESGDRPARRDME.

This sequence belongs to the polyribonucleotide nucleotidyltransferase family. It depends on Mg(2+) as a cofactor.

The protein localises to the cytoplasm. The catalysed reaction is RNA(n+1) + phosphate = RNA(n) + a ribonucleoside 5'-diphosphate. Involved in mRNA degradation. Catalyzes the phosphorolysis of single-stranded polyribonucleotides processively in the 3'- to 5'-direction. The polypeptide is Polyribonucleotide nucleotidyltransferase (Zymomonas mobilis subsp. mobilis (strain ATCC 31821 / ZM4 / CP4)).